The sequence spans 562 residues: Glutamate--tRNA ligase (562 aa).

Positions 101–111 match the 'HIGH' region motif; sequence PEPNGYPHIGH.

Belongs to the class-I aminoacyl-tRNA synthetase family. Glutamate--tRNA ligase type 2 subfamily.

It localises to the cytoplasm. The enzyme catalyses tRNA(Glu) + L-glutamate + ATP = L-glutamyl-tRNA(Glu) + AMP + diphosphate. Catalyzes the attachment of glutamate to tRNA(Glu) in a two-step reaction: glutamate is first activated by ATP to form Glu-AMP and then transferred to the acceptor end of tRNA(Glu). The protein is Glutamate--tRNA ligase of Cenarchaeum symbiosum (strain A).